The chain runs to 880 residues: Valine--tRNA ligase (880 aa).

The short motif at 49-59 is the 'HIGH' region element; it reads PNVTGKLHLGH. The 'KMSKS' region signature appears at 525-529; sequence KMSKS. Residue Lys528 participates in ATP binding. A coiled-coil region spans residues 809–880; it reads LEGLINIDEE…VEKRIAELKN (72 aa).

Belongs to the class-I aminoacyl-tRNA synthetase family. ValS type 1 subfamily. In terms of assembly, monomer.

The protein resides in the cytoplasm. It carries out the reaction tRNA(Val) + L-valine + ATP = L-valyl-tRNA(Val) + AMP + diphosphate. Its function is as follows. Catalyzes the attachment of valine to tRNA(Val). As ValRS can inadvertently accommodate and process structurally similar amino acids such as threonine, to avoid such errors, it has a 'posttransfer' editing activity that hydrolyzes mischarged Thr-tRNA(Val) in a tRNA-dependent manner. The chain is Valine--tRNA ligase from Bacillus licheniformis (strain ATCC 14580 / DSM 13 / JCM 2505 / CCUG 7422 / NBRC 12200 / NCIMB 9375 / NCTC 10341 / NRRL NRS-1264 / Gibson 46).